Here is a 349-residue protein sequence, read N- to C-terminus: Phenylalanine--tRNA ligase alpha subunit (349 aa).

E258 provides a ligand contact to Mg(2+).

The protein belongs to the class-II aminoacyl-tRNA synthetase family. Phe-tRNA synthetase alpha subunit type 1 subfamily. Tetramer of two alpha and two beta subunits. Requires Mg(2+) as cofactor.

The protein resides in the cytoplasm. The catalysed reaction is tRNA(Phe) + L-phenylalanine + ATP = L-phenylalanyl-tRNA(Phe) + AMP + diphosphate + H(+). This is Phenylalanine--tRNA ligase alpha subunit from Rickettsia conorii (strain ATCC VR-613 / Malish 7).